The following is a 454-amino-acid chain: Bifunctional protein GlmU (454 aa).

The interval M1 to R228 is pyrophosphorylase. UDP-N-acetyl-alpha-D-glucosamine contacts are provided by residues L9–G12, K23, Q74, G79–T80, Y101–D103, G138, E153, N168, and N226. A Mg(2+)-binding site is contributed by D103. Position 226 (N226) interacts with Mg(2+). The tract at residues L229–E249 is linker. The N-acetyltransferase stretch occupies residues G250–A454. 2 residues coordinate UDP-N-acetyl-alpha-D-glucosamine: R332 and K350. H362 acts as the Proton acceptor in catalysis. Y365 and N376 together coordinate UDP-N-acetyl-alpha-D-glucosamine. Acetyl-CoA-binding positions include A379, N385–Y386, S404, A422, and R439.

This sequence in the N-terminal section; belongs to the N-acetylglucosamine-1-phosphate uridyltransferase family. The protein in the C-terminal section; belongs to the transferase hexapeptide repeat family. In terms of assembly, homotrimer. Requires Mg(2+) as cofactor.

Its subcellular location is the cytoplasm. It carries out the reaction alpha-D-glucosamine 1-phosphate + acetyl-CoA = N-acetyl-alpha-D-glucosamine 1-phosphate + CoA + H(+). It catalyses the reaction N-acetyl-alpha-D-glucosamine 1-phosphate + UTP + H(+) = UDP-N-acetyl-alpha-D-glucosamine + diphosphate. The protein operates within nucleotide-sugar biosynthesis; UDP-N-acetyl-alpha-D-glucosamine biosynthesis; N-acetyl-alpha-D-glucosamine 1-phosphate from alpha-D-glucosamine 6-phosphate (route II): step 2/2. It participates in nucleotide-sugar biosynthesis; UDP-N-acetyl-alpha-D-glucosamine biosynthesis; UDP-N-acetyl-alpha-D-glucosamine from N-acetyl-alpha-D-glucosamine 1-phosphate: step 1/1. It functions in the pathway bacterial outer membrane biogenesis; LPS lipid A biosynthesis. Functionally, catalyzes the last two sequential reactions in the de novo biosynthetic pathway for UDP-N-acetylglucosamine (UDP-GlcNAc). The C-terminal domain catalyzes the transfer of acetyl group from acetyl coenzyme A to glucosamine-1-phosphate (GlcN-1-P) to produce N-acetylglucosamine-1-phosphate (GlcNAc-1-P), which is converted into UDP-GlcNAc by the transfer of uridine 5-monophosphate (from uridine 5-triphosphate), a reaction catalyzed by the N-terminal domain. This chain is Bifunctional protein GlmU, found in Marinobacter nauticus (strain ATCC 700491 / DSM 11845 / VT8) (Marinobacter aquaeolei).